Consider the following 309-residue polypeptide: tRNA uridine(34) hydroxylase (309 aa).

Residues 130–224 (SDPDTIVIDT…YLEEVPQEES (95 aa)) enclose the Rhodanese domain. Cysteine 184 serves as the catalytic Cysteine persulfide intermediate.

Belongs to the TrhO family.

It catalyses the reaction uridine(34) in tRNA + AH2 + O2 = 5-hydroxyuridine(34) in tRNA + A + H2O. Catalyzes oxygen-dependent 5-hydroxyuridine (ho5U) modification at position 34 in tRNAs. This chain is tRNA uridine(34) hydroxylase, found in Rhizobium johnstonii (strain DSM 114642 / LMG 32736 / 3841) (Rhizobium leguminosarum bv. viciae).